The sequence spans 223 residues: MAAAGGGGGGAAGRAYSFKVVLLGEGCVGKTSLVLRYCENKFNDKHITTLQASFLTKKLNIGGKRVNLAIWDTAGQERFHALGPIYYRDSNGAILVYDITDEDSFQKVKNWVKELRKMLGNEICLCIVGNKIDLEKERHVSIQEAESYAESVGAKHYHTSAKQNKGIEELFLDLCKRMIETAQVDERAKGNGSSQPGAARRGVQIIDDEPQAQSSGGGCCSSG.

An N-acetylalanine modification is found at A2. Residues G26, G29, K30, T31, S32, N43, D44, H46, T48, and T49 each coordinate GTP. T31 contributes to the Mg(2+) binding site. The Switch 1 motif lies at 41–54 (KFNDKHITTLQASF). Positions 49 and 72 each coordinate Mg(2+). Residues 74–92 (AGQERFHALGPIYYRDSNG) carry the Switch 2 motif. GTP-binding residues include G75, N130, K131, D133, A161, and K162. 2 S-geranylgeranyl cysteine lipidation sites follow: C219 and C220. C220 carries the cysteine methyl ester modification. A propeptide spans 221 to 223 (SSG) (removed in mature form).

Belongs to the small GTPase superfamily. Rab family. Interacts with the cytoplasmic tail of integrins ITGA1, ITGA2, ITGA5, ITGA6, ITGA11 and ITGB1; this interaction is dependent upon its GDP/GTP cycle. Interacts with ANKRD27. Interacts (active GTP-bound form) with TMED10; the interaction is indirect and regulates TMED10 abundance and localization at the Golgi. Requires Mg(2+) as cofactor.

Its subcellular location is the endoplasmic reticulum membrane. It is found in the golgi apparatus. The protein localises to the trans-Golgi network. The protein resides in the golgi apparatus membrane. It localises to the early endosome membrane. Its subcellular location is the cytoplasmic vesicle membrane. It is found in the cleavage furrow. The protein localises to the cell projection. The protein resides in the neuron projection. The enzyme catalyses GTP + H2O = GDP + phosphate + H(+). Its activity is regulated as follows. Regulated by guanine nucleotide exchange factors (GEFs) including ANKRD27 and RABGEF1, which promote the exchange of bound GDP for free GTP. Regulated by GTPase activating proteins (GAPs) which increase the GTP hydrolysis activity. Inhibited by GDP dissociation inhibitors (GDIs). In terms of biological role, the small GTPases Rab are key regulators of intracellular membrane trafficking, from the formation of transport vesicles to their fusion with membranes. Rabs cycle between an inactive GDP-bound form and an active GTP-bound form that is able to recruit to membranes different sets of downstream effectors directly responsible for vesicle formation, movement, tethering and fusion. RAB21 is involved in membrane trafficking control. Regulates integrin internalization and recycling, but does not influence the traffic of endosomally translocated receptors in general. As a result, may regulate cell adhesion and migration. During the mitosis of adherent cells, controls the endosomal trafficking of integrins which is required for the successful completion of cytokinesis. Involved in neurite growth. Modulates protein levels of the cargo receptors TMED2 and TMED10, and required for appropriate Golgi localization of TMED10. This Canis lupus familiaris (Dog) protein is Ras-related protein Rab-21 (RAB21).